A 97-amino-acid polypeptide reads, in one-letter code: Serine protease inhibitor Kazal-type 8 (97 aa).

An N-terminal signal peptide occupies residues methionine 1–alanine 21. The 61-residue stretch at aspartate 36–asparagine 96 folds into the Kazal-like domain. Cystine bridges form between cysteine 42/cysteine 76, cysteine 49/cysteine 73, and cysteine 62/cysteine 94. An N-linked (GlcNAc...) asparagine glycan is attached at asparagine 85.

The protein localises to the secreted. Probable serine protease inhibitor. The chain is Serine protease inhibitor Kazal-type 8 (SPINK8) from Homo sapiens (Human).